A 354-amino-acid polypeptide reads, in one-letter code: S-adenosylmethionine:tRNA ribosyltransferase-isomerase (354 aa).

Belongs to the QueA family. Monomer.

It localises to the cytoplasm. It carries out the reaction 7-aminomethyl-7-carbaguanosine(34) in tRNA + S-adenosyl-L-methionine = epoxyqueuosine(34) in tRNA + adenine + L-methionine + 2 H(+). The protein operates within tRNA modification; tRNA-queuosine biosynthesis. Transfers and isomerizes the ribose moiety from AdoMet to the 7-aminomethyl group of 7-deazaguanine (preQ1-tRNA) to give epoxyqueuosine (oQ-tRNA). In Salmonella schwarzengrund (strain CVM19633), this protein is S-adenosylmethionine:tRNA ribosyltransferase-isomerase.